The chain runs to 159 residues: UPF0336 protein ML1910 (159 aa).

This sequence belongs to the UPF0336 family.

The chain is UPF0336 protein ML1910 from Mycobacterium leprae (strain TN).